The following is a 366-amino-acid chain: 1-deoxy-D-xylulose 5-phosphate reductoisomerase (366 aa).

NADPH is bound by residues Thr7, Gly8, Ser9, Ile10, Gly31, Lys32, Asn33, and Asn113. Lys114 contributes to the 1-deoxy-D-xylulose 5-phosphate binding site. An NADPH-binding site is contributed by Glu115. Asp133 contributes to the Mn(2+) binding site. 1-deoxy-D-xylulose 5-phosphate contacts are provided by Ser134, Glu135, Ser158, and His181. Glu135 contacts Mn(2+). Gly187 is a binding site for NADPH. 1-deoxy-D-xylulose 5-phosphate is bound by residues Ser194, Asn199, Lys200, and Glu203. Glu203 lines the Mn(2+) pocket.

The protein belongs to the DXR family. Requires Mg(2+) as cofactor. Mn(2+) serves as cofactor.

It catalyses the reaction 2-C-methyl-D-erythritol 4-phosphate + NADP(+) = 1-deoxy-D-xylulose 5-phosphate + NADPH + H(+). It participates in isoprenoid biosynthesis; isopentenyl diphosphate biosynthesis via DXP pathway; isopentenyl diphosphate from 1-deoxy-D-xylulose 5-phosphate: step 1/6. In terms of biological role, catalyzes the NADPH-dependent rearrangement and reduction of 1-deoxy-D-xylulose-5-phosphate (DXP) to 2-C-methyl-D-erythritol 4-phosphate (MEP). The sequence is that of 1-deoxy-D-xylulose 5-phosphate reductoisomerase from Helicobacter pylori (strain G27).